Consider the following 483-residue polypeptide: Regulatory protein ViaA (483 aa).

The protein belongs to the ViaA family. In terms of assembly, homodimer. Interacts with RavA.

It is found in the cytoplasm. Functionally, component of the RavA-ViaA chaperone complex, which may act on the membrane to optimize the function of some of the respiratory chains. ViaA stimulates the ATPase activity of RavA. This is Regulatory protein ViaA from Salmonella agona (strain SL483).